Reading from the N-terminus, the 710-residue chain is Chloride channel protein CLC-e (710 aa).

12 consecutive transmembrane segments (helical) span residues 74–94, 122–142, 164–184, 193–213, 222–242, 261–281, 296–316, 340–360, 379–399, 412–432, 451–471, and 472–492; these read ELAI…VVLF, IGSN…VVSI, VKAV…LGTG, SVEI…KSPQ, GSAA…FFAV, TTSM…IGLG, PGEL…SLAL, VFPV…PEVL, GLSA…TAWC, SLFI…LALA, GLVG…TAVL, and LLFE…AVGM. Positions 500 to 534 are disordered; sequence QSKRQETRETKETRKRKSQEAVQSLTSSDDESSTN. The segment covering 502 to 511 has biased composition (basic and acidic residues); that stretch reads KRQETRETKE. The segment covering 520 to 534 has biased composition (polar residues); the sequence is AVQSLTSSDDESSTN. CBS domains are found at residues 565–624 and 640–702; these read MRTR…GNNR and KCKV…ATRM. The chain crosses the membrane as a helical span at residues 667–687; it reads HVAVVSGSIDAPRIHPVGVLD.

It belongs to the chloride channel (TC 2.A.49) family. As to quaternary structure, homodimer.

The protein localises to the membrane. The enzyme catalyses 2 chloride(in) + H(+)(out) = 2 chloride(out) + H(+)(in). Functionally, voltage-gated thylakoid chloride (Cl) channel/transporter involved in chloride homeostasis after transition from light to dark. Influences chloroplast ultrastructure and subsequent photosynthetic electron transport. During photosynthetic response on transition from dark to low light, involved in a sequential mechanism of adaptation; VCCN1 and CLCe first trigger the activation of photoprotection, which is later down-regulated by KEA3 to a low steady state, while adjusting electron transport. Regulates photosynthesis by a pH-independent mechanism likely involving Cl(-) homeostasis. This Arabidopsis thaliana (Mouse-ear cress) protein is Chloride channel protein CLC-e.